The following is a 930-amino-acid chain: Wings apart-like protein 1 (930 aa).

Residues 540–566 (FSPTSMSGSQSSVSGNEPTTSKTRVGS) are disordered. The segment covering 541 to 553 (SPTSMSGSQSSVS) has biased composition (low complexity). Over residues 554–566 (GNEPTTSKTRVGS) the composition is skewed to polar residues. The WAPL domain occupies 854–909 (KEAEKMIVEAYSALLLAFLSTESRSIRNSIKDYLPKRNLAILVPVLERFVAFHMTL).

This sequence belongs to the WAPL family. As to quaternary structure, interacts with the cohesin complex throughout the cell cycle. In terms of tissue distribution, expressed in roots, leaves, buds and siliques.

The protein resides in the nucleus. Its subcellular location is the chromosome. Its function is as follows. Regulator of sister chromatid cohesion in meiosis which negatively regulates cohesin association with chromatin, acting as an antagonist of CTF7. Cohesion ensures that chromosome partitioning is accurate in both meiotic and mitotic cells and plays an important role in DNA repair. Essential for the prophase removal of cohesin during meiosis thus determining the timely release of meiotic cohesion. Important for proper spindle attachment and assembly during meiosis. Helps to prevent abnormal centromere association during prophase I in meiocytes. Required for early embryonic patterning. Also involved in chromosome segregation during mitosis. This is Wings apart-like protein 1 from Arabidopsis thaliana (Mouse-ear cress).